The following is a 595-amino-acid chain: NADH-quinone oxidoreductase subunit C/D (595 aa).

Residues 1–186 (MAETDIAMPE…TPYMQDKAKQ (186 aa)) form an NADH dehydrogenase I subunit C region. The interval 210–595 (DFMFLNLGPN…IDVVMADVDR (386 aa)) is NADH dehydrogenase I subunit D.

It in the N-terminal section; belongs to the complex I 30 kDa subunit family. The protein in the C-terminal section; belongs to the complex I 49 kDa subunit family. NDH-1 is composed of 13 different subunits. Subunits NuoB, CD, E, F, and G constitute the peripheral sector of the complex.

It localises to the cell inner membrane. It carries out the reaction a quinone + NADH + 5 H(+)(in) = a quinol + NAD(+) + 4 H(+)(out). Its function is as follows. NDH-1 shuttles electrons from NADH, via FMN and iron-sulfur (Fe-S) centers, to quinones in the respiratory chain. The immediate electron acceptor for the enzyme in this species is believed to be ubiquinone. Couples the redox reaction to proton translocation (for every two electrons transferred, four hydrogen ions are translocated across the cytoplasmic membrane), and thus conserves the redox energy in a proton gradient. The polypeptide is NADH-quinone oxidoreductase subunit C/D (Acinetobacter baumannii (strain AYE)).